The following is a 59-amino-acid chain: U-limacoditoxin(3)-Dv33 (59 aa).

The N-terminal stretch at methionine 1–serine 19 is a signal peptide.

Belongs to the limacoditoxin-3 family. In terms of processing, the natural peptide is not amidated. The recombinant peptide is amidated. As to expression, expressed by the venom secretory cell of the spine. The spine is a cuticular structure containing a single large nucleated venom-secreting cell at its base. It is an independent unit capable of producing, storing and injecting venom. On the back of D.vulnerans caterpillars, spines are grouped together by 50 to 100 to form scoli, of which there are eight in D.vulnerans.

Its subcellular location is the secreted. Its function is as follows. Probable toxin. Shows a relatively potent antiparasitic activity against the major pathogenic nematode of ruminants (H.contortus, EC(50)=2.6 uM). Does not show insecticidal and antimicrobial activities. Does not induce increase in intracellular calcium in mouse DRG neurons, suggesting that it does not induce pain. The sequence is that of U-limacoditoxin(3)-Dv33 from Doratifera vulnerans (Mottled cup moth).